Reading from the N-terminus, the 901-residue chain is Quinate repressor protein (901 aa).

The sufficient for repression stretch occupies residues 1–88 (MSILVRPPKR…DSLQTRRKFP (88 aa)). Disordered regions lie at residues 26–59 (LRDFGQGNSASTPINTSADYGRFDERPGSGDGSR) and 878–901 (EEQGEEYDQSAMRTRLENLDGQPM). A compositionally biased stretch (polar residues) spans 31-43 (QGNSASTPINTSA).

It in the N-terminal section; belongs to the shikimate kinase family. This sequence in the 2nd section; belongs to the type-I 3-dehydroquinase family. The protein in the C-terminal section; belongs to the shikimate dehydrogenase family. As to quaternary structure, interacts with qutA; transcriptional activator of the quinate utilization pathway genes.

Functionally, multi-domain repressor protein that negatively regulates transcription of the quinate utilization pathway genes. May mediate its repressor activity by binding directly to the qutA activator protein. This chain is Quinate repressor protein (qutR), found in Emericella nidulans (strain FGSC A4 / ATCC 38163 / CBS 112.46 / NRRL 194 / M139) (Aspergillus nidulans).